The chain runs to 231 residues: Claudin-10 (231 aa).

Residues 1–21 traverse the membrane as a helical segment; it reads MASTALEIVAFVVSISGWVLV. Residues 22-80 lie on the Extracellular side of the membrane; sequence SSTLPTDYWKVSTIDGTVITTATYFANLWKICVTDSTGVANCKEFPSMLALDGYIQACR. Residues 81-101 traverse the membrane as a helical segment; the sequence is GLMIAAVSLGFFGSIFALFGM. Over 102–115 the chain is Cytoplasmic; sequence KCTKVGGSDQAKAK. A helical membrane pass occupies residues 116 to 136; sequence IACLAGIVFILSGLCSMTGCS. At 137-160 the chain is on the extracellular side; the sequence is LYANKITTEFFDPLYMEQKYELGA. A helical membrane pass occupies residues 161 to 181; the sequence is ALFIGWAGASLCIIGGVIFCF. The Cytoplasmic segment spans residues 182–231; sequence SISDNNKTPRMGYTYNGPTSAMSSRTKYQGGEGDFKTTGPSKQFDKNAYV.

The protein belongs to the claudin family. In terms of assembly, can form homodimers both in trans (interaction between CLDN10 molecules in opposing membranes) and in cis (interaction between CLDN10 molecules within one membrane). Interacts with CLDN19. In terms of tissue distribution, widely expressed, with highest expression detected in brain cortex, kidney and lung. In kidney, the expression is highest in medulla, with transcripts being detected in medullary thick ascending limb of Henle's loop (mTAL) and outer and inner medullary collecting ducts. Expressed in salivary glands and skin. Detected in kidney with transcripts being detected in PCT, mTAL and cortical collecting duct. Detected in uterus. Expressed in proximal tubules (at protein level). As to expression, only detected in kidney and uterus. In terms of tissue distribution, detected in kidney with transcripts being detected in PCT, mTAL and cortical collecting duct. Detected in uterus. Expressed in the inner ear where it is detected in organ of Corti, marginal cells of stria vascularis, Reissner's membrane and spiral limbus (at protein level).

The protein resides in the cell junction. Its subcellular location is the tight junction. It is found in the cell membrane. The protein localises to the endoplasmic reticulum. It carries out the reaction Na(+)(in) = Na(+)(out). The catalysed reaction is Li(+)(in) = Li(+)(out). It catalyses the reaction K(+)(in) = K(+)(out). The enzyme catalyses Rb(+)(in) = Rb(+)(out). It carries out the reaction Cs(+)(in) = Cs(+)(out). The catalysed reaction is NH4(+)(in) = NH4(+)(out). It catalyses the reaction methylamine(out) = methylamine(in). The enzyme catalyses Mg(2+)(in) = Mg(2+)(out). It carries out the reaction Ca(2+)(in) = Ca(2+)(out). The catalysed reaction is Sr(2+)(in) = Sr(2+)(out). It catalyses the reaction chloride(in) = chloride(out). The enzyme catalyses nitrate(in) = nitrate(out). Forms paracellular channels: polymerizes in tight junction strands with cation- and anion-selective channels through the strands, conveying epithelial permeability in a process known as paracellular tight junction permeability. Its function is as follows. Forms cation-selective paracellular channels. In sweat glands and in the thick ascending limb (TAL) of Henle's loop in kidney, it controls paracellular sodium permeability which is essential for proper sweat production and renal function. In terms of biological role, forms anion-selective paracellular channels. In renal proximal tubules, it conveys selective chloride over hydrogencarbonate anion permeability which is required for renal chloride reabsorption and salt homeostasis. This is Claudin-10 from Mus musculus (Mouse).